We begin with the raw amino-acid sequence, 105 residues long: Large ribosomal subunit protein uL24 (105 aa).

It belongs to the universal ribosomal protein uL24 family. As to quaternary structure, part of the 50S ribosomal subunit.

In terms of biological role, one of two assembly initiator proteins, it binds directly to the 5'-end of the 23S rRNA, where it nucleates assembly of the 50S subunit. One of the proteins that surrounds the polypeptide exit tunnel on the outside of the subunit. This Aromatoleum aromaticum (strain DSM 19018 / LMG 30748 / EbN1) (Azoarcus sp. (strain EbN1)) protein is Large ribosomal subunit protein uL24.